Consider the following 97-residue polypeptide: Small ribosomal subunit protein uS19 (97 aa).

Belongs to the universal ribosomal protein uS19 family.

In terms of biological role, protein S19 forms a complex with S13 that binds strongly to the 16S ribosomal RNA. This Salinibacter ruber (strain DSM 13855 / M31) protein is Small ribosomal subunit protein uS19.